A 101-amino-acid polypeptide reads, in one-letter code: MGIKVKVEFLGGLDVISNGVREHKCEVPLEEGEATMIDLIKYITATIISDPKDVPVFIEEGTVRPGILVLINDTDWELEGMEDYVVESGDVLTFTSTLHGG.

Gly101 is modified (1-thioglycine). Gly101 participates in a covalent cross-link: Glycyl lysine isopeptide (Gly-Lys) (interchain with K-? in acceptor proteins).

The protein belongs to the URM1 family. C-terminal thiocarboxylation occurs in 2 steps, it is first acyl-adenylated (-COAMP) via the hesA/moeB/thiF part of UBA4, then thiocarboxylated (-COSH) via the rhodanese domain of UBA4.

It is found in the cytoplasm. It functions in the pathway tRNA modification; 5-methoxycarbonylmethyl-2-thiouridine-tRNA biosynthesis. Acts as a sulfur carrier required for 2-thiolation of mcm(5)S(2)U at tRNA wobble positions of cytosolic tRNA(Lys), tRNA(Glu) and tRNA(Gln). Serves as sulfur donor in tRNA 2-thiolation reaction by being thiocarboxylated (-COSH) at its C-terminus by the MOCS3 homolog UBA4. The sulfur is then transferred to tRNA to form 2-thiolation of mcm(5)S(2)U. Prior mcm(5) tRNA modification by the elongator complex is required for 2-thiolation. Also acts as a ubiquitin-like protein (UBL) that is covalently conjugated via an isopeptide bond to lysine residues of target proteins such as AHP1. The thiocarboxylated form serves as substrate for conjugation and oxidative stress specifically induces the formation of UBL-protein conjugates. This is Ubiquitin-related modifier 1 from Debaryomyces hansenii (strain ATCC 36239 / CBS 767 / BCRC 21394 / JCM 1990 / NBRC 0083 / IGC 2968) (Yeast).